Consider the following 387-residue polypeptide: MKQAVIVDCIRTPMGRSKAGVFRNVRAETLSAELMKGLLLRNPQLDPNTIEDVIWGCVQQTLEQGFNIARNASLLAGIPKTAGAVTVNRLCGSSMEAIHQAARAIMTGMGDTFIIGGVEHMGHVPMNHGVDFHPGLANNVAKASGMMGLTAEMLGKLHGITREQQDAFAVRSHQRAYAATIEGRFAKEIYGIEGHDATGALIKVLQDEVIRPETTMESLAVLRPVFDPVNGTVTAGTSSALSDGASAMLIMEESKARALGLPIRARIRSMAVAGCDAAIMGYGPVPATQKALARAGITVNDLDVIELNEAFAAQSLPCVKDLGLLDVVDEKINLNGGAIALGHPLGCSGARISTTLINLMEHKDATLGLATMCIGLGQGIATVFERV.

The active-site Acyl-thioester intermediate is C91. Residues H343 and C373 each act as proton acceptor in the active site.

This sequence belongs to the thiolase-like superfamily. Thiolase family. In terms of assembly, heterotetramer of two alpha chains (FadB) and two beta chains (FadA).

Its subcellular location is the cytoplasm. The catalysed reaction is an acyl-CoA + acetyl-CoA = a 3-oxoacyl-CoA + CoA. Its pathway is lipid metabolism; fatty acid beta-oxidation. Catalyzes the final step of fatty acid oxidation in which acetyl-CoA is released and the CoA ester of a fatty acid two carbons shorter is formed. This Shewanella oneidensis (strain ATCC 700550 / JCM 31522 / CIP 106686 / LMG 19005 / NCIMB 14063 / MR-1) protein is 3-ketoacyl-CoA thiolase.